The sequence spans 1414 residues: MRDLVKQLKSEKHTAEFDALRIKLASPEEVRSWSYGEVKKPETINYRTFKPEREGLFCAKIFGPIKDYECLCGKYKRLKHRGVICEKCGVEVTLAKVRRERMGHIELASPVAHIWYLKSLPSRIGLLLDVTLRDIERILYFEAYVVVDPGMTDLEPRQLLSEEAYLDALEEYGDDFTALMGAEAIQRLLRDIDVEAEVEALRTELQTTTSETKTKKLTKRLKVLSAFLESGNKPEWMILTVLPVLPPDLRPLVPLDGGRFATSDLNDLYRRVINRNNRLKRLLDLNAPDIIVRNEKRMLQEAVDALLDNGRRGRAILGSNRRQLKSLADMIKGKSGRFRQNLLGKRVDYSGRSVIVVGPTLKLHQAGLPKKMALELFKPFIFSKLQLRGLATTVKAAKKLVENEGPEVWDILEEVIREHPILLNRAPTLHRLGIQAFEPVLVEGKAIQLHPLVCTAYNADFDGDQMAVHVPLTLEAQLEARSLMMSTNNVLHPANGEPIIVPSQDVVLGLYYITRDRVNAKGEGMRFADAQEVVRAYENDQVDLHARITVRIKEGILNEAGEIEESDRLVNTAAGRILLWQIVPKGLPFALVDQPMTKKAVTKLLDFCYRNLGLKTTVIFADKLMYMGFHYATHSGVSIGINDLVVPDQKEAIISRAEDEVREIEKQYASGLVTHGERRNKVIDIWSRTNDQVAKAMMEKIAVEKVKDAEGKEVAQSSFNSIYMMSDSGARGSAAQTRQLAGMRGLMARPDGTIIETPITANFREGLNVLQYFISTHGARKGLADTALKTANSGYLTRRLVDVAQDLVVTEHDCGTEASIEMMPHIEGGDVVEPLRERVLGRILAEPVMDPKSRKELLAKDTFLDERRVDILEEHSIDRVRVRSAITCEARYGICSMCYGRDLARGHVVNVGEAIGVVAAQSIGEPGTQLTMRTFHIGGAASRATAANNIEVKSTGKIKLRNLKTVEQAQGNLVAVSRSGELVVQDLQGSEREHYKVPYGATISVRDGDSVKAGQIVAQWDPHTHPIITEVAGTLRFVDLVDGVTMNRQTDELTGLSSIVITSTKQRSASGKELRPMVKLVDKNDDDLFLPGGKVPAHYFLPEGTFLTKEDGTTVNIGDVLARIPQETSKTRDITGGLPRVADLFEARRPKDAAILAEISGVVSFGKDTKDKGRLIITAPDGTTHEELIPKWRHVSVFEGETVEKGEVIADGPRDPHDILRLLGVNALANYIVNEVQEVYRLQGVKINDKHIEVIVRQMLRKVKITQPGDTDLLQNEQVERTRVREENEKIIKKDGTVAKVEPILLGITKASLATESFISAASFQETTRVLTAASVAGKRDDLRGLKENVIVGRLIPAGTGFSYHQQRRAVAGKSVEEKEIEEKRVTASEAEQALSEALKSSAPQEAKAAQKDE.

Residues Cys70, Cys72, Cys85, and Cys88 each coordinate Zn(2+). Mg(2+) contacts are provided by Asp460, Asp462, and Asp464. Zn(2+)-binding residues include Cys814, Cys888, Cys895, and Cys898. Residues 1392 to 1403 (EQALSEALKSSA) are compositionally biased toward low complexity. The tract at residues 1392-1414 (EQALSEALKSSAPQEAKAAQKDE) is disordered.

Belongs to the RNA polymerase beta' chain family. In terms of assembly, the RNAP catalytic core consists of 2 alpha, 1 beta, 1 beta' and 1 omega subunit. When a sigma factor is associated with the core the holoenzyme is formed, which can initiate transcription. Mg(2+) is required as a cofactor. It depends on Zn(2+) as a cofactor.

The catalysed reaction is RNA(n) + a ribonucleoside 5'-triphosphate = RNA(n+1) + diphosphate. In terms of biological role, DNA-dependent RNA polymerase catalyzes the transcription of DNA into RNA using the four ribonucleoside triphosphates as substrates. The protein is DNA-directed RNA polymerase subunit beta' of Coxiella burnetii (strain Dugway 5J108-111).